The chain runs to 126 residues: MMDSTGMGCWGEERVLRLLQKRGWQLVSQRWSCRYGELDLVVEKQQRVLVVEVKSRRSRGLDHWGLCAFNKGKQLRLMRAIGCWLATHPYFAEHSLELVMALVPLPPSQNTLDWIRIDDLDIDAAD.

The protein belongs to the UPF0102 family.

The polypeptide is UPF0102 protein PMT_0624 (Prochlorococcus marinus (strain MIT 9313)).